Consider the following 185-residue polypeptide: Pyruvate/ketoisovalerate oxidoreductases common subunit gamma (185 aa).

As to quaternary structure, heterotetramer of one alpha, one beta, one delta and one gamma chain.

It carries out the reaction 2 oxidized [2Fe-2S]-[ferredoxin] + pyruvate + CoA = 2 reduced [2Fe-2S]-[ferredoxin] + acetyl-CoA + CO2 + H(+). The enzyme catalyses 3-methyl-2-oxobutanoate + 2 oxidized [2Fe-2S]-[ferredoxin] + CoA = 2-methylpropanoyl-CoA + 2 reduced [2Fe-2S]-[ferredoxin] + CO2 + H(+). This chain is Pyruvate/ketoisovalerate oxidoreductases common subunit gamma (porG), found in Pyrococcus furiosus (strain ATCC 43587 / DSM 3638 / JCM 8422 / Vc1).